A 578-amino-acid polypeptide reads, in one-letter code: Arginine--tRNA ligase (578 aa).

The 'HIGH' region signature appears at 127 to 137 (PNLAKEMHVGH).

The protein belongs to the class-I aminoacyl-tRNA synthetase family. In terms of assembly, monomer.

Its subcellular location is the cytoplasm. It catalyses the reaction tRNA(Arg) + L-arginine + ATP = L-arginyl-tRNA(Arg) + AMP + diphosphate. The chain is Arginine--tRNA ligase from Pseudomonas putida (strain ATCC 700007 / DSM 6899 / JCM 31910 / BCRC 17059 / LMG 24140 / F1).